The primary structure comprises 142 residues: Multiprotein-bridging factor 1b (142 aa).

Residues asparagine 49–serine 75 are disordered. Positions alanine 50–threonine 64 are enriched in polar residues. The span at lysine 65–serine 75 shows a compositional bias: basic and acidic residues. The 55-residue stretch at isoleucine 87–lysine 141 folds into the HTH cro/C1-type domain. The segment at residues glutamine 98–serine 117 is a DNA-binding region (H-T-H motif).

It belongs to the MBF1 family. Expressed in leaves, roots, stems, petioles and shoots. Higher expression in flowers and siliques. Detected in leaf veins through development.

The protein localises to the nucleus. It localises to the nucleolus. In terms of biological role, transcriptional coactivator that stimulates transcriptional activity by bridging regulatory proteins and TBP, thereby recruiting TBP to promoters occupied by DNA-binding regulators. The protein is Multiprotein-bridging factor 1b (MBF1B) of Arabidopsis thaliana (Mouse-ear cress).